The following is a 284-amino-acid chain: L-ribulose-5-phosphate 3-epimerase UlaE (284 aa).

The protein belongs to the L-ribulose-5-phosphate 3-epimerase family.

The catalysed reaction is L-ribulose 5-phosphate = L-xylulose 5-phosphate. The protein operates within cofactor degradation; L-ascorbate degradation; D-xylulose 5-phosphate from L-ascorbate: step 3/4. Functionally, catalyzes the isomerization of L-xylulose-5-phosphate to L-ribulose-5-phosphate. Is involved in the anaerobic L-ascorbate utilization. The sequence is that of L-ribulose-5-phosphate 3-epimerase UlaE from Salmonella typhimurium (strain LT2 / SGSC1412 / ATCC 700720).